A 316-amino-acid polypeptide reads, in one-letter code: Phosphatidylinositol mannoside acyltransferase (316 aa).

Catalysis depends on H137, which acts as the Proton acceptor. Hexadecanoyl-CoA-binding residues include H137 and R175. E211 is an active-site residue. Position 240 (E240) interacts with hexadecanoyl-CoA.

The protein belongs to the LpxL/LpxM/LpxP family.

The protein localises to the cell inner membrane. It carries out the reaction a 2,6-O-bis(alpha-D-mannopyranosyl)-1-phosphatidyl-1D-myo-inositol + an acyl-CoA = a 2-O-(alpha-D-mannosyl)-6-O-(6-O-acyl-alpha-D-mannosyl)-1-phosphatidyl-1D-myo-inositol + CoA. The catalysed reaction is a 1,2-diacyl-sn-glycero-3-phospho-[alpha-D-mannopyranosyl-(1&lt;-&gt;6)-D-myo-inositol] + an acyl-CoA = a 1,2-diacyl-sn-glycero-3-phospho-[alpha-D-6-acyl-mannopyranosyl-(1&lt;-&gt;6)-D-myo-inositol] + CoA. It functions in the pathway phospholipid metabolism; phosphatidylinositol metabolism. In terms of biological role, catalyzes the transfer of a palmitoyl moiety from palmitoyl-CoA to the 6-position of the mannose ring linked to the 2-position of myo-inositol in phosphatidyl-myo-inositol monomannoside (PIM1) or dimannoside (PIM2). This Mycobacterium tuberculosis (strain CDC 1551 / Oshkosh) protein is Phosphatidylinositol mannoside acyltransferase.